A 208-amino-acid polypeptide reads, in one-letter code: Ion-translocating oxidoreductase complex subunit G (208 aa).

A helical transmembrane segment spans residues 9-29 (GVTLAVFAALTTGLTAMVNAL). An FMN phosphoryl threonine modification is found at Thr-174.

This sequence belongs to the RnfG family. The complex is composed of six subunits: RnfA, RnfB, RnfC, RnfD, RnfE and RnfG. The cofactor is FMN.

It is found in the cell inner membrane. Part of a membrane-bound complex that couples electron transfer with translocation of ions across the membrane. The sequence is that of Ion-translocating oxidoreductase complex subunit G from Cronobacter sakazakii (strain ATCC BAA-894) (Enterobacter sakazakii).